A 117-amino-acid polypeptide reads, in one-letter code: Large ribosomal subunit protein bL17 (117 aa).

Belongs to the bacterial ribosomal protein bL17 family. Part of the 50S ribosomal subunit. Contacts protein L32.

This is Large ribosomal subunit protein bL17 from Exiguobacterium sp. (strain ATCC BAA-1283 / AT1b).